We begin with the raw amino-acid sequence, 646 residues long: Protein real-time (646 aa).

The PRELI/MSF1 domain occupies 2–175; that stretch reads VQKYESPVRI…FINELKKEGI (174 aa). The region spanning 294–471 is the CRAL-TRIO domain; it reads TPVVVEKYFP…FLGGSCITMI (178 aa). The GOLD domain maps to 499-646; that stretch reads HHGLYKSVDL…GFSSNSLQSR (148 aa).

The protein localises to the mitochondrion. This is Protein real-time from Aedes aegypti (Yellowfever mosquito).